Consider the following 530-residue polypeptide: UPF0422 protein lpp3030 (530 aa).

A signal peptide spans Met-1–Ala-19. Residues Asp-20–Ala-66 are a coiled coil. The interval Leu-50–Ala-81 is disordered. Residues Gln-63–Ser-79 are compositionally biased toward low complexity.

This sequence belongs to the UPF0422 family.

In Legionella pneumophila (strain Paris), this protein is UPF0422 protein lpp3030.